Here is a 586-residue protein sequence, read N- to C-terminus: 2-succinyl-5-enolpyruvyl-6-hydroxy-3-cyclohexene-1-carboxylate synthase (586 aa).

The protein belongs to the TPP enzyme family. MenD subfamily. In terms of assembly, homodimer. Mg(2+) serves as cofactor. Requires Mn(2+) as cofactor. The cofactor is thiamine diphosphate.

It catalyses the reaction isochorismate + 2-oxoglutarate + H(+) = 5-enolpyruvoyl-6-hydroxy-2-succinyl-cyclohex-3-ene-1-carboxylate + CO2. The protein operates within quinol/quinone metabolism; 1,4-dihydroxy-2-naphthoate biosynthesis; 1,4-dihydroxy-2-naphthoate from chorismate: step 2/7. Its pathway is quinol/quinone metabolism; menaquinone biosynthesis. Its function is as follows. Catalyzes the thiamine diphosphate-dependent decarboxylation of 2-oxoglutarate and the subsequent addition of the resulting succinic semialdehyde-thiamine pyrophosphate anion to isochorismate to yield 2-succinyl-5-enolpyruvyl-6-hydroxy-3-cyclohexene-1-carboxylate (SEPHCHC). The chain is 2-succinyl-5-enolpyruvyl-6-hydroxy-3-cyclohexene-1-carboxylate synthase from Geobacillus thermodenitrificans (strain NG80-2).